The chain runs to 269 residues: Phosphate import ATP-binding protein PstB (269 aa).

An ABC transporter domain is found at 21-264 (SEVRNLSFYY…PKNKQTEDYI (244 aa)). 53–60 (GPSGCGKS) contacts ATP.

This sequence belongs to the ABC transporter superfamily. Phosphate importer (TC 3.A.1.7) family. The complex is composed of two ATP-binding proteins (PstB), two transmembrane proteins (PstC and PstA) and a solute-binding protein (PstS).

It localises to the cell inner membrane. The catalysed reaction is phosphate(out) + ATP + H2O = ADP + 2 phosphate(in) + H(+). Functionally, part of the ABC transporter complex PstSACB involved in phosphate import. Responsible for energy coupling to the transport system. In Nitrosospira multiformis (strain ATCC 25196 / NCIMB 11849 / C 71), this protein is Phosphate import ATP-binding protein PstB.